Consider the following 438-residue polypeptide: Glutamyl-tRNA(Gln) amidotransferase subunit D (438 aa).

Residues 92 to 422 (PEVTIIGTGG…EEVRKMMLTN (331 aa)) form the Asparaginase/glutaminase domain. Active-site residues include threonine 102, threonine 178, aspartate 179, and lysine 256.

The protein belongs to the asparaginase 1 family. GatD subfamily. Heterodimer of GatD and GatE.

It catalyses the reaction L-glutamyl-tRNA(Gln) + L-glutamine + ATP + H2O = L-glutaminyl-tRNA(Gln) + L-glutamate + ADP + phosphate + H(+). Its function is as follows. Allows the formation of correctly charged Gln-tRNA(Gln) through the transamidation of misacylated Glu-tRNA(Gln) in organisms which lack glutaminyl-tRNA synthetase. The reaction takes place in the presence of glutamine and ATP through an activated gamma-phospho-Glu-tRNA(Gln). The GatDE system is specific for glutamate and does not act on aspartate. The chain is Glutamyl-tRNA(Gln) amidotransferase subunit D from Pyrococcus abyssi (strain GE5 / Orsay).